Here is a 254-residue protein sequence, read N- to C-terminus: 4-hydroxy-tetrahydrodipicolinate reductase (254 aa).

Residues 8-13 (GCSGKM), Asp-35, 86-88 (CST), and 110-113 (SANM) contribute to the NAD(+) site. Residue His-143 is the Proton donor/acceptor of the active site. His-144 is a (S)-2,3,4,5-tetrahydrodipicolinate binding site. Residue Lys-147 is the Proton donor of the active site. Position 153–154 (153–154 (GT)) interacts with (S)-2,3,4,5-tetrahydrodipicolinate.

The protein belongs to the DapB family.

It is found in the cytoplasm. The catalysed reaction is (S)-2,3,4,5-tetrahydrodipicolinate + NAD(+) + H2O = (2S,4S)-4-hydroxy-2,3,4,5-tetrahydrodipicolinate + NADH + H(+). It catalyses the reaction (S)-2,3,4,5-tetrahydrodipicolinate + NADP(+) + H2O = (2S,4S)-4-hydroxy-2,3,4,5-tetrahydrodipicolinate + NADPH + H(+). Its pathway is amino-acid biosynthesis; L-lysine biosynthesis via DAP pathway; (S)-tetrahydrodipicolinate from L-aspartate: step 4/4. Catalyzes the conversion of 4-hydroxy-tetrahydrodipicolinate (HTPA) to tetrahydrodipicolinate. This chain is 4-hydroxy-tetrahydrodipicolinate reductase, found in Clostridium perfringens (strain 13 / Type A).